We begin with the raw amino-acid sequence, 114 residues long: Large ribosomal subunit protein uL22 (114 aa).

It belongs to the universal ribosomal protein uL22 family. As to quaternary structure, part of the 50S ribosomal subunit.

Functionally, this protein binds specifically to 23S rRNA; its binding is stimulated by other ribosomal proteins, e.g. L4, L17, and L20. It is important during the early stages of 50S assembly. It makes multiple contacts with different domains of the 23S rRNA in the assembled 50S subunit and ribosome. Its function is as follows. The globular domain of the protein is located near the polypeptide exit tunnel on the outside of the subunit, while an extended beta-hairpin is found that lines the wall of the exit tunnel in the center of the 70S ribosome. This chain is Large ribosomal subunit protein uL22, found in Streptococcus thermophilus (strain CNRZ 1066).